The sequence spans 177 residues: Large ribosomal subunit protein uL6 (177 aa).

K44 is modified (N6-acetyllysine).

The protein belongs to the universal ribosomal protein uL6 family. Part of the 50S ribosomal subunit.

Its function is as follows. This protein binds to the 23S rRNA, and is important in its secondary structure. It is located near the subunit interface in the base of the L7/L12 stalk, and near the tRNA binding site of the peptidyltransferase center. The polypeptide is Large ribosomal subunit protein uL6 (Shigella sonnei (strain Ss046)).